The primary structure comprises 158 residues: NADH-quinone oxidoreductase subunit B (158 aa).

The [4Fe-4S] cluster site is built by Cys37, Cys38, Cys102, and Cys132.

The protein belongs to the complex I 20 kDa subunit family. NDH-1 is composed of 14 different subunits. Subunits NuoB, C, D, E, F, and G constitute the peripheral sector of the complex. [4Fe-4S] cluster serves as cofactor.

It is found in the cell inner membrane. It catalyses the reaction a quinone + NADH + 5 H(+)(in) = a quinol + NAD(+) + 4 H(+)(out). In terms of biological role, NDH-1 shuttles electrons from NADH, via FMN and iron-sulfur (Fe-S) centers, to quinones in the respiratory chain. The immediate electron acceptor for the enzyme in this species is believed to be ubiquinone. Couples the redox reaction to proton translocation (for every two electrons transferred, four hydrogen ions are translocated across the cytoplasmic membrane), and thus conserves the redox energy in a proton gradient. This is NADH-quinone oxidoreductase subunit B from Halorhodospira halophila (strain DSM 244 / SL1) (Ectothiorhodospira halophila (strain DSM 244 / SL1)).